Consider the following 589-residue polypeptide: Arginine--tRNA ligase (589 aa).

The 'HIGH' region motif lies at 123 to 133; sequence ANVAKPMHVGH.

It belongs to the class-I aminoacyl-tRNA synthetase family. Monomer.

It is found in the cytoplasm. It catalyses the reaction tRNA(Arg) + L-arginine + ATP = L-arginyl-tRNA(Arg) + AMP + diphosphate. This Hyphomonas neptunium (strain ATCC 15444) protein is Arginine--tRNA ligase.